We begin with the raw amino-acid sequence, 378 residues long: Cytochrome b (378 aa).

Helical transmembrane passes span 34 to 54 (FGSL…FLAM), 78 to 99 (WLLR…YLHV), 114 to 134 (WLIG…GYVL), and 179 to 199 (FFTF…IHLL). Positions 84 and 98 each coordinate heme b. The heme b site is built by H183 and H197. H202 lines the a ubiquinone pocket. Transmembrane regions (helical) follow at residues 227–247 (FKDI…VLIS), 289–309 (LGGV…PFYN), 321–341 (INQV…WIGA), and 348–368 (YVLI…VNPL).

Belongs to the cytochrome b family. As to quaternary structure, the main subunits of complex b-c1 are: cytochrome b, cytochrome c1 and the Rieske protein. Heme b is required as a cofactor.

Its subcellular location is the mitochondrion inner membrane. Component of the ubiquinol-cytochrome c reductase complex (complex III or cytochrome b-c1 complex) that is part of the mitochondrial respiratory chain. The b-c1 complex mediates electron transfer from ubiquinol to cytochrome c. Contributes to the generation of a proton gradient across the mitochondrial membrane that is then used for ATP synthesis. The protein is Cytochrome b (mt:Cyt-b) of Drosophila simulans (Fruit fly).